Here is a 292-residue protein sequence, read N- to C-terminus: Elongation factor Ts (292 aa).

Residues T80 to V83 are involved in Mg(2+) ion dislocation from EF-Tu.

It belongs to the EF-Ts family.

The protein resides in the cytoplasm. Functionally, associates with the EF-Tu.GDP complex and induces the exchange of GDP to GTP. It remains bound to the aminoacyl-tRNA.EF-Tu.GTP complex up to the GTP hydrolysis stage on the ribosome. This is Elongation factor Ts from Mycoplasmopsis synoviae (strain 53) (Mycoplasma synoviae).